A 365-amino-acid polypeptide reads, in one-letter code: Probable 7-methylxanthine methyltransferase PCS2 (365 aa).

Position 19 (Tyr-19) interacts with S-adenosyl-L-homocysteine. Thr-26 is a binding site for theobromine. 5 residues coordinate S-adenosyl-L-homocysteine: Cys-62, Asp-99, Leu-100, Ser-134, and Phe-135. Theobromine contacts are provided by Tyr-152, His-155, and Trp-156. Asn-173 contacts Mg(2+). Theobromine is bound at residue Arg-221. Asp-259, Phe-261, and Asn-262 together coordinate Mg(2+).

This sequence belongs to the methyltransferase superfamily. Type-7 methyltransferase family. It depends on Mg(2+) as a cofactor.

It carries out the reaction 7-methylxanthine + S-adenosyl-L-methionine = theobromine + S-adenosyl-L-homocysteine + H(+). Functionally, no detectable N-methyltransferase activity. This is Probable 7-methylxanthine methyltransferase PCS2 from Camellia ptilophylla (Cocoa tea).